The chain runs to 603 residues: Beta-hexosaminidase (603 aa).

A signal peptide spans 1–19 (MAYFRLYAVLLAVASSVAA). Catalysis depends on charge relay system residues Asp225, His278, and Glu349. An intrachain disulfide couples Cys293 to Cys354. A glycan (N-linked (GlcNAc...) asparagine) is linked at Asn356. Residues Cys451 and Cys486 are joined by a disulfide bond. Asn503 and Asn528 each carry an N-linked (GlcNAc...) asparagine glycan. Residues Cys586 and Cys593 are joined by a disulfide bond.

This sequence belongs to the glycosyl hydrolase 20 family. In terms of assembly, homodimer.

The protein resides in the secreted. The enzyme catalyses Hydrolysis of terminal non-reducing N-acetyl-D-hexosamine residues in N-acetyl-beta-D-hexosaminides.. Part of the binary chitinolytic system. Involved in hydrolysis of chitobiose and higher chito-oligomers (produced from cell wall chitin by endochitinases), thus contributing to the formation of germ tubes, fruit-bodies and septa during hyphenation. Hydrolyzes synthetic substrates p-nitrophenyl-beta-N-acetyl-glucosamine (pNP-beta-GlcNAc), p-nitrophenyl-beta-N-acetyl-galactosamine (pNP-beta-GalNAc) and 5-bromo-4-chloro-3-indoyl-beta-D-N-glucosaminide (X-GlcNAc). The protein is Beta-hexosaminidase of Emericella nidulans (Aspergillus nidulans).